Consider the following 32-residue polypeptide: MSDIN-like toxin proprotein 2 (32 aa).

Positions 1-10 are excised as a propeptide; the sequence is MSDINATRLP. The segment at residues 11-17 is a cross-link (cyclopeptide (His-Pro)); that stretch reads HLVRYPP. The propeptide occupies 18–32; the sequence is YVGDGTDLTLNRGEK.

This sequence belongs to the MSDIN fungal toxin family. Post-translationally, processed by the macrocyclase-peptidase enzyme POPB to yield a toxic cyclic heptapeptide. POPB first removes 10 residues from the N-terminus. Conformational trapping of the remaining peptide forces the enzyme to release this intermediate rather than proceed to macrocyclization. The enzyme rebinds the remaining peptide in a different conformation and catalyzes macrocyclization of the N-terminal 7 residues.

Functionally, probable toxin that belongs to the MSDIN-like toxin family responsible for a large number of food poisoning cases and deaths. This Amanita fuligineoides protein is MSDIN-like toxin proprotein 2.